The sequence spans 872 residues: Alanine--tRNA ligase (872 aa).

The Zn(2+) site is built by histidine 563, histidine 567, cysteine 665, and histidine 669.

The protein belongs to the class-II aminoacyl-tRNA synthetase family. Zn(2+) serves as cofactor.

It localises to the cytoplasm. The catalysed reaction is tRNA(Ala) + L-alanine + ATP = L-alanyl-tRNA(Ala) + AMP + diphosphate. In terms of biological role, catalyzes the attachment of alanine to tRNA(Ala) in a two-step reaction: alanine is first activated by ATP to form Ala-AMP and then transferred to the acceptor end of tRNA(Ala). Also edits incorrectly charged Ser-tRNA(Ala) and Gly-tRNA(Ala) via its editing domain. The chain is Alanine--tRNA ligase from Bacteroides fragilis (strain ATCC 25285 / DSM 2151 / CCUG 4856 / JCM 11019 / LMG 10263 / NCTC 9343 / Onslow / VPI 2553 / EN-2).